We begin with the raw amino-acid sequence, 245 residues long: uncharacterized protein (245 aa).

Helical transmembrane passes span 10-30 (FYTL…SPWY), 94-114 (TLAF…YVHI), 134-154 (VLIG…FLII), and 196-216 (RGWI…IYCW).

It is found in the membrane. This is an uncharacterized protein from Dictyostelium discoideum (Social amoeba).